Reading from the N-terminus, the 378-residue chain is Putative zinc finger protein C09F5.3 (378 aa).

Residues 1 to 14 (MRKTEKMKRPHNSS) show a composition bias toward basic residues. Disordered stretches follow at residues 1 to 36 (MRKT…SKSI) and 61 to 80 (TLSE…NSAP). Composition is skewed to basic and acidic residues over residues 16–26 (VKQEERADDSH) and 62–71 (LSEHVPEKKP). The segment at 42–65 (LKCELCSTVCSSISQLQSHTLSEH) adopts a C2H2-type 1 zinc-finger fold. Residues 85–107 (VACQQCEDTFEDFAQFAIHMKSH) form a C2H2-type 2; degenerate zinc finger. Residues 204–226 (YGCALCATSYPSQLHLITHVQMS) form a C2H2-type 3; degenerate zinc finger. The disordered stretch occupies residues 231–250 (TFYPPSLPIPTPPSPKSTPK). The segment covering 235–246 (PSLPIPTPPSPK) has biased composition (pro residues). 4 consecutive C2H2-type zinc fingers follow at residues 254 to 277 (LQCS…LRKH), 284 to 306 (DKCA…CLRH), 312 to 334 (HHCP…CAYH), and 355 to 377 (FVCP…TKIH).

Its subcellular location is the nucleus. This Caenorhabditis elegans protein is Putative zinc finger protein C09F5.3.